Reading from the N-terminus, the 467-residue chain is H(+)/Cl(-) exchange transporter ClcA (467 aa).

Over 1-30 (MTKRERIVKSVLAHVPKDAINQFVSRGSTP) the chain is Cytoplasmic. A helical membrane pass occupies residues 31 to 67 (FSVLIMAAIVGTLAGFVGTYFELAVHFVSETRTEWLR). The Periplasmic segment spans residues 68 to 74 (SEIGSVL). Residues 75–98 (PLWLAAVLISALLAFIGYFLVHRF) form a helical membrane-spanning segment. The Selectivity filter part_1 signature appears at 104–108 (GSGIP). Residue serine 105 participates in chloride binding. Residues 107-114 (IPEIEGAM) constitute an intramembrane region (helical). At 115–121 (DNIRPVR) the chain is on the cytoplasmic side. A run of 2 helical transmembrane segments spans residues 122-139 (WWRV…ALGS) and 146-164 (EGPT…TDIF). The Selectivity filter part_2 motif lies at 144-148 (GREGP). Residues 165 to 174 (RVKDDDTRHS) lie on the Cytoplasmic side of the membrane. 2 intramembrane regions (helical) span residues 175–187 (LLAS…LAAA) and 191–199 (PLAGIMFVV). Over 200–212 (EEMRPQFRYSLIS) the chain is Cytoplasmic. Residues 213–230 (IRAVIISAIMANIVFRAI) form a helical membrane-spanning segment. Over 231–250 (NGQDAVITMPQYQSPALQTL) the chain is Periplasmic. The chain crosses the membrane as a helical span at residues 251-279 (WLFLLLGALFGVFGVIFNKLITVAQDSFV). Residues 280-285 (AIHKND) are Cytoplasmic-facing. A helical membrane pass occupies residues 286 to 307 (RKRYLITGSILGGVFGLLLLYV). At 308–327 (PQLTGGGIALIPDVTTGNYS) the chain is on the periplasmic side. 2 helical membrane-spanning segments follow: residues 328–347 (ISIL…LCFG) and 353–374 (GIFA…ASAD). A Selectivity filter part_3 motif is present at residues 353 to 357 (GIFAP). The chloride site is built by isoleucine 354 and phenylalanine 355. Over 375–384 (VLLPTLDIEP) the chain is Periplasmic. The helical intramembrane region spans 385–399 (GVFAIAGMGALFAAT). Residues 400–402 (VRA) constitute an intramembrane region (note=Loop between two helices). Positions 403–414 (PITGILLVIEMT) form an intramembrane region, helical. The segment at residues 415–419 (NNYYL) is an intramembrane region (note=Loop between two helices). A helical transmembrane segment spans residues 420–436 (ILPLIITCLGAVIVAQL). The Cytoplasmic portion of the chain corresponds to 437 to 467 (LGGQPIYSQLLHRTLKNDKLRQQDLPENQAS). Tyrosine 443 is a chloride binding site.

Belongs to the chloride channel (TC 2.A.49) family. ClcA subfamily. As to quaternary structure, homodimer.

It is found in the cell inner membrane. The catalysed reaction is 2 chloride(in) + H(+)(out) = 2 chloride(out) + H(+)(in). Proton-coupled chloride transporter. Functions as antiport system and exchanges two chloride ions for 1 proton. Probably acts as an electrical shunt for an outwardly-directed proton pump that is linked to amino acid decarboxylation, as part of the extreme acid resistance (XAR) response. The chain is H(+)/Cl(-) exchange transporter ClcA from Vibrio parahaemolyticus serotype O3:K6 (strain RIMD 2210633).